Reading from the N-terminus, the 674-residue chain is MPKQIVIAEKHQVAAVFWKDQIQELVVSTGSQQVGDIYLGLVDNILPSIDAAFINIGDTEKNGFIHVSDLGPVRLRRTAGSISELLSPQQRVLVQVMKEPTGNKGPRLTGNISMPGRYMVLMPYGRGVNLSRRINREEERSRLRALAVLIKPPGMGLLVRTEAEDVPEDAIIEDLENLQKQWELVQQQAMTRSAPMLLDRDDDFIKRVLRDMYSSEVNRIVVDTPAGMKRIKQQLMNWDQGRLPEGVLIDCHRESLSILEYFRVNATIREALKPRVDLPSGGYIIIEPTEALTVIDVNSGSFTHSANSRETVLWTNYEAATEIARQLKLRNIGGVIIIDFIDMDSHKDQLQLLEHFNRCLETDKARPQIAQLTELGLVELTRKRQGQNLYELFGQPCPECGGLGHLVELPGEKGFVSLSPTAVNSSIPPRLVEKPILSPPVAKVNDLPKKEEAKISSPLDLLFHPNYQEQGDRDSNRRRRRRRGSEFSEKENIKSVGISRSKGPSPSPTKEKVTGTAPPRRERPSRRVEKTLVPVDVAMTTLEQDIYARMGISPLIKTEYADQDPRSFMVSVVTAGAALEGNTNGSGSLVNAVITTVDNGDNGDNVPSDGLTIVSEVTAPTPVIEQPREETVEPEQVVLPQLDDETPAAPVAEESAPIETKKRPGRRRRRSSAE.

Positions 35 to 117 (GDIYLGLVDN…LTGNISMPGR (83 aa)) constitute an S1 motif domain. Positions 296 and 339 each coordinate Mg(2+). Residues cysteine 397 and cysteine 400 each contribute to the Zn(2+) site. Disordered regions lie at residues 458-529 (PLDL…RRVE) and 626-674 (QPRE…SSAE). 2 stretches are compositionally biased toward basic and acidic residues: residues 484 to 493 (GSEFSEKENI) and 509 to 529 (TKEK…RRVE). Residues 663–674 (RPGRRRRRSSAE) are compositionally biased toward basic residues. The short motif at 665–673 (GRRRRRSSA) is the C4 Arg-rich motif, probably responsible for interaction with PNPase element.

The protein belongs to the RNase E/G family. Fractionates in a 250-300 kDa region, which is too small to be the equivalent of an RNA degradosome, as occurs with E.coli RNase E. Interacts with polynucleotide phosphorylase (PNPase, pnp), probably via the C4 Arg-rich motif (residues 665-673). Mg(2+) serves as cofactor.

It localises to the cytoplasm. It is found in the cell inner membrane. The catalysed reaction is Endonucleolytic cleavage of single-stranded RNA in A- and U-rich regions.. Its function is as follows. Endoribonuclease that plays a central role in rRNA processing and mRNA decay, and probably tRNA processing. Acts on 9S rRNA (the precursor of 5S rRNA) and RNAI, a molecule that controls the replication of ColE1 plasmid. Upon expression in E.coli does not purify with endogenous degradosome proteins. Prefers 5'-monophosphorylated substrates over 5'-triphosphorylated substrates. Complements an rne temperature-sensitive mutation in E.coli, despite being considerably shorter and not able to interact with the E.coli degradosome. Cleaves AU-rich sequences in vitro, tested with psbA2 mRNA. Complements both an rne temperature-sensitive mutation and an rng deletion in E.coli. Acts in the degradation of psaL mRNA in the presence but not the absence of the sRNA PsrR1. Cleaves the rimO-crhR transcript, contributing to the very short half-life of rimO mRNA. In terms of biological role, mRNA for psbA2, one of the core proteins in photosystem II, is degraded in the dark under control of a cis-acting AU-rich box in its 5'-UTR. RNase E cuts in this box, suggesting it is involved in this dark-induced mRNA instability. Functionally, CRISPR (clustered regularly interspaced short palindromic repeat) is an adaptive immune system that provides protection against mobile genetic elements (viruses, transposable elements and conjugative plasmids). CRISPR clusters contain spacers, sequences complementary to antecedent mobile elements, and target invading nucleic acids. CRISPR clusters are transcribed and processed into CRISPR RNA (crRNA). Endogenous RNase E is required for correct processing of pre-crRNA for the CRISPR3 subtype III-B system in this genome (genes sll7080 to sll7095). This CRISPR3 system does not include a cas6 gene, which is the usual RNase involved in crRNA maturation. The chain is Ribonuclease E from Synechocystis sp. (strain ATCC 27184 / PCC 6803 / Kazusa).